The chain runs to 170 residues: Protein-export protein SecB (170 aa).

This sequence belongs to the SecB family. In terms of assembly, homotetramer, a dimer of dimers. One homotetramer interacts with 1 SecA dimer.

The protein localises to the cytoplasm. Its function is as follows. One of the proteins required for the normal export of preproteins out of the cell cytoplasm. It is a molecular chaperone that binds to a subset of precursor proteins, maintaining them in a translocation-competent state. It also specifically binds to its receptor SecA. This Pasteurella multocida (strain Pm70) protein is Protein-export protein SecB.